A 59-amino-acid chain; its full sequence is Photosystem II reaction center protein K (59 aa).

Positions 1–22 are excised as a propeptide; the sequence is MLNIFSLIGLNSALYSSSCFFA. Residues 30–50 traverse the membrane as a helical segment; it reads FLSPIVDFMPVIPLLFFLLAF.

It belongs to the PsbK family. In terms of assembly, PSII is composed of 1 copy each of membrane proteins PsbA, PsbB, PsbC, PsbD, PsbE, PsbF, PsbH, PsbI, PsbJ, PsbK, PsbL, PsbM, PsbT, PsbX, PsbY, PsbZ, Psb30/Ycf12, at least 3 peripheral proteins of the oxygen-evolving complex and a large number of cofactors. It forms dimeric complexes.

Its subcellular location is the plastid. It is found in the chloroplast thylakoid membrane. Functionally, one of the components of the core complex of photosystem II (PSII). PSII is a light-driven water:plastoquinone oxidoreductase that uses light energy to abstract electrons from H(2)O, generating O(2) and a proton gradient subsequently used for ATP formation. It consists of a core antenna complex that captures photons, and an electron transfer chain that converts photonic excitation into a charge separation. This Silene latifolia (White campion) protein is Photosystem II reaction center protein K.